The primary structure comprises 130 residues: Albumin-1 F (130 aa).

A signal peptide spans 1-26; it reads MASVKLASLIVLFATLGMFLTKNVGA. 3 disulfide bridges follow: Cys29–Cys46, Cys33–Cys48, and Cys41–Cys58. Propeptides lie at residues 64 to 69 and 123 to 130; these read VFLRTN and LLKSVSTA.

In terms of processing, the C-terminal glycine may be removed from PA1b.

In terms of biological role, PA1b binds to basic 7S globulin (BG) and stimulates its phosphorylation activity. Involved in the signal transduction system to regulate the growth and differentiation as a hormone peptide. Toxic to various insects through binding to a high affinity binding site in the insect gut. In Pisum sativum (Garden pea), this protein is Albumin-1 F.